A 317-amino-acid polypeptide reads, in one-letter code: MTPAPKSSFVLAHRHLLGIEGLSAADITGLLDLSEEYVELNRQIDKKRTSLRGRTQVNLFFEASTRTQSSFEIAGKRLGADVMNMSVSSSSMRKGETLIDTAVTLNAMHPDLLVVRHHASGAVELLARKVDGSVVNAGDGAHEHPTQALLDALTIRRNKGRLEGLTIAICGDVMHSRVARSNILLLNIMGARVRVVAPSTLLPPGIERMGVEVARDMREGLNGADIVMMLRLQRERMNGSFVPSSQEYFQYFGLDQKKLGYAKPDALVMHPGPMNRGVEIDSIVADGAQSLIREQVEMGVAVRMAVLEALARNLPNA.

2 residues coordinate carbamoyl phosphate: R66 and T67. K94 contributes to the L-aspartate binding site. Positions 116, 144, and 147 each coordinate carbamoyl phosphate. Positions 177 and 231 each coordinate L-aspartate. Carbamoyl phosphate is bound by residues G272 and P273.

Belongs to the aspartate/ornithine carbamoyltransferase superfamily. ATCase family. Heterododecamer (2C3:3R2) of six catalytic PyrB chains organized as two trimers (C3), and six regulatory PyrI chains organized as three dimers (R2).

It carries out the reaction carbamoyl phosphate + L-aspartate = N-carbamoyl-L-aspartate + phosphate + H(+). The protein operates within pyrimidine metabolism; UMP biosynthesis via de novo pathway; (S)-dihydroorotate from bicarbonate: step 2/3. Catalyzes the condensation of carbamoyl phosphate and aspartate to form carbamoyl aspartate and inorganic phosphate, the committed step in the de novo pyrimidine nucleotide biosynthesis pathway. The chain is Aspartate carbamoyltransferase catalytic subunit from Rhodopseudomonas palustris (strain BisB18).